We begin with the raw amino-acid sequence, 65 residues long: MKIAEIKEMSTNDLVERVEAEVVNYNQMVINHSISPLENPAQIKQLRRTIARMRTELRQRELNNK.

Belongs to the universal ribosomal protein uL29 family.

The protein is Large ribosomal subunit protein uL29 of Bacteroides fragilis (strain ATCC 25285 / DSM 2151 / CCUG 4856 / JCM 11019 / LMG 10263 / NCTC 9343 / Onslow / VPI 2553 / EN-2).